The sequence spans 421 residues: C2H2 type master regulator of conidiophore development brlA (421 aa).

A compositionally biased stretch (polar residues) spans 228–242 (THSPTTPLRSCSIGT). The segment at 228–247 (THSPTTPLRSCSIGTASGPD) is disordered. 2 consecutive C2H2-type zinc fingers follow at residues 309–333 (FKCKEPGCKGRFKRQEHLKRHMKSH) and 339–364 (HVCWVPGCERAFSRSDNLNAHYTKTH). Positions 361-370 (TKTHSKRGGR) are enriched in basic residues. The interval 361-421 (TKTHSKRGGR…REYSVDGLDD (61 aa)) is disordered.

The protein localises to the nucleus. Functionally, brlA, abaA and wetA are pivotal regulators of conidiophore development and conidium maturation. They act individually and together to regulate their own expression and that of numerous other sporulation-specific genes. Binds promoters of target genes at brlA response elements (BREs) containing the conserved sequence 5'-(C/A)(A/G)AGGG(G/A)-3'. This Aspergillus parasiticus (strain ATCC 56775 / NRRL 5862 / SRRC 143 / SU-1) protein is C2H2 type master regulator of conidiophore development brlA.